Consider the following 482-residue polypeptide: Putative metabolite transport protein YfiG (482 aa).

Over 1–29 the chain is Cytoplasmic; it reads MSTKKKEAVIGKESLAHKGLLRTITLVST. The helical transmembrane segment at 30-50 threads the bilayer; sequence FGGLLFGYDTGVINGALPFMA. The Extracellular segment spans residues 51–59; that stretch reads TAGQLNLTP. The helical transmembrane segment at 60–80 threads the bilayer; that stretch reads VTEGLVASSLLLGAAFGAMFG. Residues 81–92 are Cytoplasmic-facing; sequence GRLSDRHGRRKT. The chain crosses the membrane as a helical span at residues 93-113; that stretch reads ILYLALLFIAATLGCTFSPNA. Over 114–120 the chain is Extracellular; that stretch reads SVMIAFR. The helical transmembrane segment at 121 to 141 threads the bilayer; that stretch reads FLLGLAVGCASVTVPTFLAEI. Residues 142 to 155 lie on the Cytoplasmic side of the membrane; it reads SPAERRGRIVTQNE. A helical membrane pass occupies residues 156–176; the sequence is LMIVIGQLLAYTFNAIIGSTM. Topologically, residues 177 to 184 are extracellular; the sequence is GESANVWR. Residues 185 to 205 traverse the membrane as a helical segment; the sequence is YMLVIATLPAVVLWFGMLIVP. At 206-263 the chain is on the cytoplasmic side; that stretch reads ESPRWLAAKGRMGDALRVLRQIREDSQAQQEIKEIKHAIEGTAKKAGFHDFQEPWIRR. The helical transmembrane segment at 264-284 threads the bilayer; the sequence is ILFIGIGIAIVQQITGVNSIM. Residues 285 to 301 are Extracellular-facing; that stretch reads YYGTEILREAGFQTEAA. The chain crosses the membrane as a helical span at residues 302-322; sequence LIGNIANGVISVIAVIFGIWL. Residues 323–331 lie on the Cytoplasmic side of the membrane; it reads LGKVRRRPM. 2 helical membrane-spanning segments follow: residues 332–352 and 353–373; these read LIIG…LSIV and LEGT…FLAF. The Cytoplasmic portion of the chain corresponds to 374-400; the sequence is QQTAISTVTWLMLSEIFPMHVRGLGMG. A helical transmembrane segment spans residues 401–421; that stretch reads ISTFCLWTANFLIGFTFPILL. The Extracellular segment spans residues 422–423; sequence NH. Residues 424–444 form a helical membrane-spanning segment; sequence IGMSATFFIFVAMNILAILFV. Topologically, residues 445–482 are cytoplasmic; the sequence is KKYVPETKGRSLEQLEHSFRQYGRRADQEIQNQTTHLS.

It belongs to the major facilitator superfamily. Sugar transporter (TC 2.A.1.1) family.

The protein localises to the cell membrane. In Bacillus subtilis (strain 168), this protein is Putative metabolite transport protein YfiG (yfiG).